Consider the following 531-residue polypeptide: Na(+)/H(+) antiporter NhaB (531 aa).

12 helical membrane passes run 13–33, 34–54, 90–110, 121–141, 145–165, 206–226, 242–262, 308–328, 352–372, 394–414, 456–476, and 482–502; these read FLGKAPDWYKIAIISFLIINP, LVFFFVDPFAAGWLLVVEFIF, LVANIEVLLLLVFMVAGIYFM, ILIGIKSKTALSVAFCFTAAF, FLDALTVIAVVISVAVGFYAI, LLMHAGVGTALGGVMTMVGEP, FIIRMLPVTAPVFICGLLTCV, VIAVWLIVALAMHLAAVGLIG, EEALPFTALLAVFFAIVAVII, LALFYVANGILSMVSDNVFVG, GQAAFLFLLTSALAPLIQLSY, and MALPYTIVLALVGLFGISFLL.

The protein belongs to the NhaB Na(+)/H(+) (TC 2.A.34) antiporter family.

It localises to the cell inner membrane. It catalyses the reaction 2 Na(+)(in) + 3 H(+)(out) = 2 Na(+)(out) + 3 H(+)(in). In terms of biological role, na(+)/H(+) antiporter that extrudes sodium in exchange for external protons. The sequence is that of Na(+)/H(+) antiporter NhaB from Aliivibrio salmonicida (strain LFI1238) (Vibrio salmonicida (strain LFI1238)).